Here is a 281-residue protein sequence, read N- to C-terminus: Pantothenate synthetase (281 aa).

30–37 provides a ligand contact to ATP; it reads MGNLHQGH. The active-site Proton donor is the His-37. Residue Gln-61 participates in (R)-pantoate binding. Residue Gln-61 participates in beta-alanine binding. Residue 149-152 coordinates ATP; that stretch reads GNKD. Gln-155 lines the (R)-pantoate pocket. Residues Ile-178 and 186–189 contribute to the ATP site; that span reads MSSR.

This sequence belongs to the pantothenate synthetase family. In terms of assembly, homodimer.

It is found in the cytoplasm. It catalyses the reaction (R)-pantoate + beta-alanine + ATP = (R)-pantothenate + AMP + diphosphate + H(+). The protein operates within cofactor biosynthesis; (R)-pantothenate biosynthesis; (R)-pantothenate from (R)-pantoate and beta-alanine: step 1/1. Functionally, catalyzes the condensation of pantoate with beta-alanine in an ATP-dependent reaction via a pantoyl-adenylate intermediate. This Shewanella baltica (strain OS155 / ATCC BAA-1091) protein is Pantothenate synthetase.